The chain runs to 394 residues: Elongation factor Tu (394 aa).

Positions 10-204 (KPHLNVGTIG…ALDTYIPLPE (195 aa)) constitute a tr-type G domain. Residues 19–26 (GHVDHGKT) are G1. 19 to 26 (GHVDHGKT) is a binding site for GTP. T26 contributes to the Mg(2+) binding site. A G2 region spans residues 60–64 (GITIN). The segment at 81–84 (DCPG) is G3. Residues 81 to 85 (DCPGH) and 136 to 139 (NKCD) contribute to the GTP site. Residues 136-139 (NKCD) form a G4 region. Positions 174–176 (SAL) are G5.

Belongs to the TRAFAC class translation factor GTPase superfamily. Classic translation factor GTPase family. EF-Tu/EF-1A subfamily. In terms of assembly, monomer.

It localises to the cytoplasm. The catalysed reaction is GTP + H2O = GDP + phosphate + H(+). In terms of biological role, GTP hydrolase that promotes the GTP-dependent binding of aminoacyl-tRNA to the A-site of ribosomes during protein biosynthesis. The polypeptide is Elongation factor Tu (Psychromonas ingrahamii (strain DSM 17664 / CCUG 51855 / 37)).